A 259-amino-acid chain; its full sequence is NH(3)-dependent NAD(+) synthetase (259 aa).

Residue 33–40 (GLSGGIDS) coordinates ATP. Asp-39 contacts Mg(2+). Arg-119 serves as a coordination point for deamido-NAD(+). Thr-139 provides a ligand contact to ATP. Glu-144 contacts Mg(2+). The deamido-NAD(+) site is built by Lys-152 and Asp-159. Residues Lys-168 and Ser-190 each coordinate ATP. 249-250 (HK) serves as a coordination point for deamido-NAD(+).

The protein belongs to the NAD synthetase family. Homodimer.

It carries out the reaction deamido-NAD(+) + NH4(+) + ATP = AMP + diphosphate + NAD(+) + H(+). It participates in cofactor biosynthesis; NAD(+) biosynthesis; NAD(+) from deamido-NAD(+) (ammonia route): step 1/1. Its function is as follows. Catalyzes the ATP-dependent amidation of deamido-NAD to form NAD. Uses ammonia as a nitrogen source. The chain is NH(3)-dependent NAD(+) synthetase from Methanocaldococcus jannaschii (strain ATCC 43067 / DSM 2661 / JAL-1 / JCM 10045 / NBRC 100440) (Methanococcus jannaschii).